Consider the following 161-residue polypeptide: SsrA-binding protein (161 aa).

Positions 1 to 23 (MATKKNEQIKGRTDGLVAENRRS) are disordered.

The protein belongs to the SmpB family.

It is found in the cytoplasm. In terms of biological role, required for rescue of stalled ribosomes mediated by trans-translation. Binds to transfer-messenger RNA (tmRNA), required for stable association of tmRNA with ribosomes. tmRNA and SmpB together mimic tRNA shape, replacing the anticodon stem-loop with SmpB. tmRNA is encoded by the ssrA gene; the 2 termini fold to resemble tRNA(Ala) and it encodes a 'tag peptide', a short internal open reading frame. During trans-translation Ala-aminoacylated tmRNA acts like a tRNA, entering the A-site of stalled ribosomes, displacing the stalled mRNA. The ribosome then switches to translate the ORF on the tmRNA; the nascent peptide is terminated with the 'tag peptide' encoded by the tmRNA and targeted for degradation. The ribosome is freed to recommence translation, which seems to be the essential function of trans-translation. In Hyphomonas neptunium (strain ATCC 15444), this protein is SsrA-binding protein.